The chain runs to 52 residues: Histone H2A (52 aa).

The segment at 1-25 (MSGRGKTGGKARAKAKTRSSRAGLQ) is disordered. Ser-2 is modified (N-acetylserine). Ser-2 is modified (phosphoserine). Position 6 is an N6-(2-hydroxyisobutyryl)lysine (Lys-6). Lys-6 is modified (N6-acetyllysine). The span at 7 to 19 (TGGKARAKAKTRS) shows a compositional bias: basic residues. N6-(2-hydroxyisobutyryl)lysine; alternate is present on Lys-10. Lys-10 is subject to N6-lactoyllysine; alternate. Lys-10 bears the N6-succinyllysine mark. Residues Lys-14 and Lys-16 each participate in a glycyl lysine isopeptide (Lys-Gly) (interchain with G-Cter in ubiquitin) cross-link. Lys-37 is subject to N6-(2-hydroxyisobutyryl)lysine; alternate.

As to quaternary structure, the nucleosome is a histone octamer containing two molecules each of H2A, H2B, H3 and H4 assembled in one H3-H4 heterotetramer and two H2A-H2B heterodimers. The octamer wraps approximately 147 bp of DNA. Acetylation is not necessary for the antibacterial activity. In terms of processing, monoubiquitination in C-terminus gives a specific tag for epigenetic transcriptional repression. Following DNA double-strand breaks (DSBs), it is ubiquitinated through 'Lys-63' linkage of ubiquitin moieties, leading to the recruitment of repair proteins to sites of DNA damage. H2AK119Ub and ionizing radiation-induced 'Lys-63'-linked ubiquitination are distinct events. Post-translationally, phosphorylation on Ser-2 is enhanced during mitosis. Phosphorylation on Ser-2 directly represses transcription.

The protein localises to the nucleus. Its subcellular location is the chromosome. The protein resides in the secreted. Its function is as follows. Core component of nucleosome. Nucleosomes wrap and compact DNA into chromatin, limiting DNA accessibility to the cellular machineries which require DNA as a template. Histones thereby play a central role in transcription regulation, DNA repair, DNA replication and chromosomal stability. DNA accessibility is regulated via a complex set of post-translational modifications of histones, also called histone code, and nucleosome remodeling. In terms of biological role, hipposin shows strong antimicrobial activity against several Gram-positive and Gram-negative bacteria. The polypeptide is Histone H2A (Hippoglossus hippoglossus (Atlantic halibut)).